Reading from the N-terminus, the 229-residue chain is Cytosolic-abundant heat soluble protein 107838 (229 aa).

The interval 1–29 is disordered; the sequence is MSAEAMNMNMNQDAVFIPPPEGEQYERKE. Residues 109–145 adopt a coiled-coil conformation; sequence LSANYQKEVERKTEAYRKQQEVEADKIRKELEKQHLR. CAHS motif regions lie at residues 124-142 and 161-179; these read YRKQ…LEKQ and QKKM…MDRE. Over residues 202-218 the composition is skewed to polar residues; sequence SSAAGTETGGQVVSESQ. The segment at 202-229 is disordered; it reads SSAAGTETGGQVVSESQKFTERNRQIKQ. Residues 219–229 show a composition bias toward basic and acidic residues; the sequence is KFTERNRQIKQ.

The protein belongs to the Cytosolic-abundant heat soluble protein (CAHS) family.

It is found in the cytoplasm. CAHS proteins are cytosolic heat soluble proteins that seem to contribute to the anhydrobiosis in tardigrades, but their specific mechanisms are yet to be identified. It is possible that protection during anhydrobiosis might occur via the stabilization of vitrifying small molecules such as sugars, but not via the direct glass transition of CAHS proteins themselves. The sequence is that of Cytosolic-abundant heat soluble protein 107838 from Paramacrobiotus richtersi (Water bear).